The chain runs to 100 residues: MIPKNPRQLADLVLKPIITEKATRLLENNKYVFEVVPQATKPDIKAAIESLFDVSVIKVNTVRPPRKKKRVGRFIGYKPLYKRAIVTLQDGDTITLFPEV.

Belongs to the universal ribosomal protein uL23 family. As to quaternary structure, part of the 50S ribosomal subunit. Contacts protein L29, and trigger factor when it is bound to the ribosome.

One of the early assembly proteins it binds 23S rRNA. One of the proteins that surrounds the polypeptide exit tunnel on the outside of the ribosome. Forms the main docking site for trigger factor binding to the ribosome. The protein is Large ribosomal subunit protein uL23 of Rippkaea orientalis (strain PCC 8801 / RF-1) (Cyanothece sp. (strain PCC 8801)).